The primary structure comprises 376 residues: UDP-N-acetylglucosamine 2-epimerase (376 aa).

Residues arginine 10, lysine 15, aspartate 95, glutamate 117, histidine 213, glutamine 271, phenylalanine 276, 290-292 (SGG), glutamate 296, and arginine 313 contribute to the substrate site.

It belongs to the UDP-N-acetylglucosamine 2-epimerase family. In terms of assembly, homodimer.

The protein resides in the cytoplasm. It catalyses the reaction UDP-N-acetyl-alpha-D-glucosamine = UDP-N-acetyl-alpha-D-mannosamine. It participates in bacterial outer membrane biogenesis; enterobacterial common antigen biosynthesis. Its function is as follows. Catalyzes the reversible epimerization at C-2 of UDP-N-acetylglucosamine (UDP-GlcNAc) and thereby provides bacteria with UDP-N-acetylmannosamine (UDP-ManNAc), the activated donor of ManNAc residues. This chain is UDP-N-acetylglucosamine 2-epimerase, found in Yersinia pestis.